Reading from the N-terminus, the 587-residue chain is Phosphomethylpyrimidine synthase (587 aa).

The tract at residues 1 to 58 (MTPTQNEIHPKHSYSPIRKDGLEVPETEIRLDDSPSGPNEPFRIYRTRGPETNPKQGL) is disordered. Residues 17–33 (IRKDGLEVPETEIRLDD) show a composition bias toward basic and acidic residues. Substrate is bound by residues N180, M209, Y238, H274, 294–296 (SRG), 335–338 (DGLR), and E374. H378 is a Zn(2+) binding site. Substrate is bound at residue Y401. H442 is a binding site for Zn(2+). Residues C522, C525, and C530 each coordinate [4Fe-4S] cluster.

The protein belongs to the ThiC family. Requires [4Fe-4S] cluster as cofactor.

The catalysed reaction is 5-amino-1-(5-phospho-beta-D-ribosyl)imidazole + S-adenosyl-L-methionine = 4-amino-2-methyl-5-(phosphooxymethyl)pyrimidine + CO + 5'-deoxyadenosine + formate + L-methionine + 3 H(+). It participates in cofactor biosynthesis; thiamine diphosphate biosynthesis. Catalyzes the synthesis of the hydroxymethylpyrimidine phosphate (HMP-P) moiety of thiamine from aminoimidazole ribotide (AIR) in a radical S-adenosyl-L-methionine (SAM)-dependent reaction. The polypeptide is Phosphomethylpyrimidine synthase (Corynebacterium glutamicum (strain ATCC 13032 / DSM 20300 / JCM 1318 / BCRC 11384 / CCUG 27702 / LMG 3730 / NBRC 12168 / NCIMB 10025 / NRRL B-2784 / 534)).